A 407-amino-acid chain; its full sequence is tRNA-specific 2-thiouridylase MnmA (407 aa).

ATP is bound by residues Ala20–Ser27 and Leu46. Catalysis depends on Cys114, which acts as the Nucleophile. A disulfide bridge connects residues Cys114 and Cys210. Gly138 lines the ATP pocket. The interval Arg160–Gln162 is interaction with tRNA. Cys210 functions as the Cysteine persulfide intermediate in the catalytic mechanism.

It belongs to the MnmA/TRMU family.

It localises to the cytoplasm. It catalyses the reaction S-sulfanyl-L-cysteinyl-[protein] + uridine(34) in tRNA + AH2 + ATP = 2-thiouridine(34) in tRNA + L-cysteinyl-[protein] + A + AMP + diphosphate + H(+). Functionally, catalyzes the 2-thiolation of uridine at the wobble position (U34) of tRNA, leading to the formation of s(2)U34. This is tRNA-specific 2-thiouridylase MnmA from Bartonella tribocorum (strain CIP 105476 / IBS 506).